A 172-amino-acid polypeptide reads, in one-letter code: 3-hydroxydecanoyl-[acyl-carrier-protein] dehydratase (172 aa).

Histidine 71 is a catalytic residue.

This sequence belongs to the thioester dehydratase family. FabA subfamily. In terms of assembly, homodimer.

The protein localises to the cytoplasm. It catalyses the reaction a (3R)-hydroxyacyl-[ACP] = a (2E)-enoyl-[ACP] + H2O. The enzyme catalyses (3R)-hydroxydecanoyl-[ACP] = (2E)-decenoyl-[ACP] + H2O. The catalysed reaction is (2E)-decenoyl-[ACP] = (3Z)-decenoyl-[ACP]. The protein operates within lipid metabolism; fatty acid biosynthesis. Its function is as follows. Necessary for the introduction of cis unsaturation into fatty acids. Catalyzes the dehydration of (3R)-3-hydroxydecanoyl-ACP to E-(2)-decenoyl-ACP and then its isomerization to Z-(3)-decenoyl-ACP. Can catalyze the dehydratase reaction for beta-hydroxyacyl-ACPs with saturated chain lengths up to 16:0, being most active on intermediate chain length. In Cronobacter sakazakii (strain ATCC BAA-894) (Enterobacter sakazakii), this protein is 3-hydroxydecanoyl-[acyl-carrier-protein] dehydratase.